A 181-amino-acid polypeptide reads, in one-letter code: HGPRTase-like protein 2 (181 aa).

It belongs to the purine/pyrimidine phosphoribosyltransferase family. Archaeal HPRT subfamily.

Functionally, may catalyze a purine salvage reaction, the substrate is unknown. This Haloterrigena turkmenica (strain ATCC 51198 / DSM 5511 / JCM 9101 / NCIMB 13204 / VKM B-1734 / 4k) (Halococcus turkmenicus) protein is HGPRTase-like protein 2.